We begin with the raw amino-acid sequence, 515 residues long: Bifunctional purine biosynthesis protein PurH (515 aa).

Positions 1–145 (MTKRVLISVS…KNHASVTVVV (145 aa)) constitute an MGS-like domain.

The protein belongs to the PurH family.

It catalyses the reaction (6R)-10-formyltetrahydrofolate + 5-amino-1-(5-phospho-beta-D-ribosyl)imidazole-4-carboxamide = 5-formamido-1-(5-phospho-D-ribosyl)imidazole-4-carboxamide + (6S)-5,6,7,8-tetrahydrofolate. The catalysed reaction is IMP + H2O = 5-formamido-1-(5-phospho-D-ribosyl)imidazole-4-carboxamide. The protein operates within purine metabolism; IMP biosynthesis via de novo pathway; 5-formamido-1-(5-phospho-D-ribosyl)imidazole-4-carboxamide from 5-amino-1-(5-phospho-D-ribosyl)imidazole-4-carboxamide (10-formyl THF route): step 1/1. It functions in the pathway purine metabolism; IMP biosynthesis via de novo pathway; IMP from 5-formamido-1-(5-phospho-D-ribosyl)imidazole-4-carboxamide: step 1/1. This chain is Bifunctional purine biosynthesis protein PurH, found in Streptococcus pneumoniae serotype 19F (strain G54).